The following is a 506-amino-acid chain: Probable cytochrome P450 519E1 (506 aa).

A helical transmembrane segment spans residues 1–21 (MGIGLIILYLLIGLLAYDFTK). Cysteine 453 serves as a coordination point for heme.

Belongs to the cytochrome P450 family. Requires heme as cofactor.

It localises to the membrane. In Dictyostelium discoideum (Social amoeba), this protein is Probable cytochrome P450 519E1 (cyp519E1).